We begin with the raw amino-acid sequence, 97 residues long: Aspartyl/glutamyl-tRNA(Asn/Gln) amidotransferase subunit C (97 aa).

The tract at residues 74-97 is disordered; sequence AEQALDQAPASQRDRFEVPRILGE. Positions 85-97 are enriched in basic and acidic residues; that stretch reads QRDRFEVPRILGE.

The protein belongs to the GatC family. In terms of assembly, heterotrimer of A, B and C subunits.

It catalyses the reaction L-glutamyl-tRNA(Gln) + L-glutamine + ATP + H2O = L-glutaminyl-tRNA(Gln) + L-glutamate + ADP + phosphate + H(+). It carries out the reaction L-aspartyl-tRNA(Asn) + L-glutamine + ATP + H2O = L-asparaginyl-tRNA(Asn) + L-glutamate + ADP + phosphate + 2 H(+). Allows the formation of correctly charged Asn-tRNA(Asn) or Gln-tRNA(Gln) through the transamidation of misacylated Asp-tRNA(Asn) or Glu-tRNA(Gln) in organisms which lack either or both of asparaginyl-tRNA or glutaminyl-tRNA synthetases. The reaction takes place in the presence of glutamine and ATP through an activated phospho-Asp-tRNA(Asn) or phospho-Glu-tRNA(Gln). The chain is Aspartyl/glutamyl-tRNA(Asn/Gln) amidotransferase subunit C from Corynebacterium kroppenstedtii (strain DSM 44385 / JCM 11950 / CIP 105744 / CCUG 35717).